Reading from the N-terminus, the 509-residue chain is Photosystem II CP47 reaction center protein (509 aa).

6 helical membrane passes run 21–36 (AVHL…WAGS), 101–115 (IVLS…IWHW), 140–156 (GIHL…FGAF), 203–218 (IAAG…FHLT), 237–252 (VLSS…AFVT), and 457–472 (NFAL…HGSR).

It belongs to the PsbB/PsbC family. PsbB subfamily. As to quaternary structure, PSII is composed of 1 copy each of membrane proteins PsbA, PsbB, PsbC, PsbD, PsbE, PsbF, PsbH, PsbI, PsbJ, PsbK, PsbL, PsbM, PsbT, PsbX, PsbY, PsbZ, Psb30/Ycf12, at least 3 peripheral proteins of the oxygen-evolving complex and a large number of cofactors. It forms dimeric complexes. Requires Binds multiple chlorophylls. PSII binds additional chlorophylls, carotenoids and specific lipids. as cofactor.

Its subcellular location is the plastid. The protein localises to the chloroplast thylakoid membrane. In terms of biological role, one of the components of the core complex of photosystem II (PSII). It binds chlorophyll and helps catalyze the primary light-induced photochemical processes of PSII. PSII is a light-driven water:plastoquinone oxidoreductase, using light energy to abstract electrons from H(2)O, generating O(2) and a proton gradient subsequently used for ATP formation. The protein is Photosystem II CP47 reaction center protein of Pyropia yezoensis (Susabi-nori).